A 395-amino-acid chain; its full sequence is Probable protein arginine N-methyltransferase 6.2 (395 aa).

Residues 1-11 (MFAGGADGGNG) are compositionally biased toward gly residues. The disordered stretch occupies residues 1 to 37 (MFAGGADGGNGHLPRPRRARRGGGGGGGMGSPPLGPP). Positions 45 to 390 (DMAYFKAYSH…YFTRDQWYVK (346 aa)) constitute an SAM-dependent MTase PRMT-type domain. 5 residues coordinate S-adenosyl-L-methionine: His58, Arg67, Gly91, Asp113, and Glu142. Active-site residues include Glu156 and Glu165. The tract at residues 300–324 (KKQANQCLDGNTQDASPSNKKKKAD) is disordered. Positions 302–317 (QANQCLDGNTQDASPS) are enriched in polar residues.

It belongs to the class I-like SAM-binding methyltransferase superfamily. Protein arginine N-methyltransferase family. PRMT6 subfamily.

Arginine methyltransferase that can both catalyze the formation of omega-N monomethylarginine (MMA) and asymmetrical dimethylarginine (aDMA). This Oryza sativa subsp. indica (Rice) protein is Probable protein arginine N-methyltransferase 6.2 (PRMT6.2).